The following is a 288-amino-acid chain: Quinate/shikimate dehydrogenase (288 aa).

Positions 71 and 107 each coordinate substrate. NAD(+)-binding positions include 132–135 (AGGA), 155–158 (NRRD), K205, 232–235 (CVYN), and G255.

This sequence belongs to the shikimate dehydrogenase family. Homodimer.

It catalyses the reaction L-quinate + NAD(+) = 3-dehydroquinate + NADH + H(+). The catalysed reaction is L-quinate + NADP(+) = 3-dehydroquinate + NADPH + H(+). The enzyme catalyses shikimate + NADP(+) = 3-dehydroshikimate + NADPH + H(+). It carries out the reaction shikimate + NAD(+) = 3-dehydroshikimate + NADH + H(+). The protein operates within metabolic intermediate biosynthesis; chorismate biosynthesis; chorismate from D-erythrose 4-phosphate and phosphoenolpyruvate: step 4/7. The actual biological function of YdiB remains unclear, nor is it known whether 3-dehydroshikimate or quinate represents the natural substrate. Catalyzes the reversible NAD-dependent reduction of both 3-dehydroshikimate (DHSA) and 3-dehydroquinate to yield shikimate (SA) and quinate, respectively. It can use both NAD or NADP for catalysis, however it has higher catalytic efficiency with NAD. The protein is Quinate/shikimate dehydrogenase of Escherichia coli O17:K52:H18 (strain UMN026 / ExPEC).